Reading from the N-terminus, the 103-residue chain is Antitoxin VapB1 (103 aa).

Its function is as follows. Antitoxin component of a type II toxin-antitoxin (TA) system. Upon expression in E.coli neutralizes the effect of cognate toxin VapC1, partially inhibits the RNase activity of VapC1 in vitro. The chain is Antitoxin VapB1 (vapB1) from Rickettsia felis (strain ATCC VR-1525 / URRWXCal2) (Rickettsia azadi).